We begin with the raw amino-acid sequence, 309 residues long: Putative S-adenosyl-L-methionine-dependent methyltransferase Mflv_0743 (309 aa).

S-adenosyl-L-methionine is bound by residues aspartate 134 and 163 to 164; that span reads DL.

Belongs to the UPF0677 family.

Its function is as follows. Exhibits S-adenosyl-L-methionine-dependent methyltransferase activity. This chain is Putative S-adenosyl-L-methionine-dependent methyltransferase Mflv_0743, found in Mycolicibacterium gilvum (strain PYR-GCK) (Mycobacterium gilvum (strain PYR-GCK)).